We begin with the raw amino-acid sequence, 159 residues long: Ribosome maturation factor RimP (159 aa).

Belongs to the RimP family.

It is found in the cytoplasm. Functionally, required for maturation of 30S ribosomal subunits. This chain is Ribosome maturation factor RimP, found in Halothermothrix orenii (strain H 168 / OCM 544 / DSM 9562).